A 312-amino-acid polypeptide reads, in one-letter code: Retron Ec83 reverse transcriptase (312 aa).

One can recognise a Reverse transcriptase domain in the interval 14–239; it reads PDFDVLLKSR…HNRHVTGVTL (226 aa). 3 residues coordinate Mg(2+): aspartate 97, aspartate 185, and aspartate 186.

Belongs to the bacterial reverse transcriptase family.

It catalyses the reaction DNA(n) + a 2'-deoxyribonucleoside 5'-triphosphate = DNA(n+1) + diphosphate. Its function is as follows. Reverse transcriptase (RT) component of antiviral defense system retron Ec83, composed of a non-coding RNA (ncRNA), this reverse transcriptase (RT), a probable ATPase and a putative HNH endonuclease. Expression of retron Ec83 confers protection against bacteriophages T2, T4 and T6. At multiplicity of infection (MOI) of 0.02 cultures slow growth when infected with T4 but do not collapse, at MOI 2 cultures enter growth stasis. Responsible for synthesis of msDNA-Ec83 (a linear ssDNA with a 5'-terminal phosphate residue). Unlike most known msDNAs the mature product from the original strain does not have an RNA component. When the ncRNA plus RT are expressed in strain K12 / JM109 only linear DNA is seen in stationary phase cells, but logarithmic phase cells have both a linear and branched msDNA (a branched molecule with RNA linked by a 2',5'-phosphodiester bond to ssDNA, a 'classic' retron). The branched msDNA is probably the precursor for the mature linear msDNA, the precursor is cleaved endonucleolytically by ExoVII (xseA-xseB) leaving the observed mature 5'-phosphate ssDNA terminus. The retron transcript serves as primer (from a conserved internal G residue) and template for the reaction, and codes for the RT. Overexpression of the ncRNA and RT, which leads to increased levels of msDNA, is mutagenic in vivo. This may be due to a mismatch in the msDNA stem which binds and sequesters MutS and/or MutL. The polypeptide is Retron Ec83 reverse transcriptase (Escherichia coli).